The primary structure comprises 451 residues: MTSQPTSSLQGSCSICFEDLKQNDKISAIVCGHIYHHGCISQWIATKRQCPSCRRTVPKNGFVEKLFFDVQRMGGEAEKPPEIDYREEHYKLSTSLKVEQEKLGTLNTENKNLKDTVKSLEKKIIREKDKYRQEIPKLQATINHLTISSEETAYLKRELQESKNRLKTCEFYKILTVHSSEADKQLGEYLKKNGNLDTEKFFQLMKSTNKDLTDKRREAAKEIEQLKMEVQSLKRAAQEDAAIKKTLKKTVLDLRERANVDTPINNKRLRDVLETETPPPAKRKSMGFDESSQMIDPDGELSFFKQNENRTPVTSVPSTSKAVLPFNFDDDEDDEYFKTPKIAEKKKKLPEAMAPVSEDSFDFDIAVPQSIINRIPAKTTAQPAKKYPKIPNLSAKTSSKPTEAPKTENVLKIKSKSQEIAQKPQKSTRISSFFSRTTSSTSNLTEYVILD.

An RING-type; atypical zinc finger spans residues 13-54 (CSICFEDLKQNDKISAIVCGHIYHHGCISQWIATKRQCPSCR). 2 coiled-coil regions span residues 96-130 (LKVE…EKDK) and 209-243 (NKDL…DAAI). Disordered regions lie at residues 270–297 (RDVL…MIDP) and 389–442 (KIPN…SSTS). A compositionally biased stretch (low complexity) spans 427–442 (STRISSFFSRTTSSTS).

The protein belongs to the TRAIP family.

It is found in the nucleus. The protein resides in the chromosome. The enzyme catalyses S-ubiquitinyl-[E2 ubiquitin-conjugating enzyme]-L-cysteine + [acceptor protein]-L-lysine = [E2 ubiquitin-conjugating enzyme]-L-cysteine + N(6)-ubiquitinyl-[acceptor protein]-L-lysine.. It functions in the pathway protein modification; protein ubiquitination. Its function is as follows. E3 ubiquitin ligase that acts as a key regulator of DNA repair in response to replication stress. Acts by mediating ubiquitination of the CMG helicase complex, promoting the unloading of the CMG helicase complex by the p97 ATPase (cdc-48.1 or cdc-48.2). The polypeptide is E3 ubiquitin-protein ligase trul-1 (Caenorhabditis elegans).